An 859-amino-acid polypeptide reads, in one-letter code: Rod cGMP-specific 3',5'-cyclic phosphodiesterase subunit alpha (859 aa).

An N-acetylglycine modification is found at glycine 2. GAF domains lie at glutamine 73–methionine 222 and aspartate 254–valine 431. In terms of domain architecture, PDEase spans glutamate 483 to tyrosine 816. Histidine 559 (proton donor) is an active-site residue. A divalent metal cation-binding residues include histidine 563, histidine 599, aspartate 600, and aspartate 720. The interval lysine 821–glutamine 859 is disordered. The segment covering glutamine 830–serine 840 has biased composition (low complexity). The span at glutamine 841–proline 851 shows a compositional bias: gly residues. Cysteine 856 carries the cysteine methyl ester modification. Cysteine 856 is lipidated: S-farnesyl cysteine. Residues cysteine 857–glutamine 859 constitute a propeptide, removed in mature form.

The protein belongs to the cyclic nucleotide phosphodiesterase family. Oligomer composed of two catalytic chains (alpha and beta), an inhibitory chain (gamma) and the delta chain. The cofactor is a divalent metal cation.

The protein resides in the cell membrane. It is found in the cell projection. Its subcellular location is the cilium. It localises to the photoreceptor outer segment. It carries out the reaction 3',5'-cyclic GMP + H2O = GMP + H(+). Rod-specific cGMP phosphodiesterase that catalyzes the hydrolysis of 3',5'-cyclic GMP. This protein participates in processes of transmission and amplification of the visual signal. In Bos taurus (Bovine), this protein is Rod cGMP-specific 3',5'-cyclic phosphodiesterase subunit alpha.